The chain runs to 189 residues: UPF0340 protein SAG0103 (189 aa).

Belongs to the UPF0340 family.

The chain is UPF0340 protein SAG0103 from Streptococcus agalactiae serotype V (strain ATCC BAA-611 / 2603 V/R).